A 975-amino-acid chain; its full sequence is Glycine dehydrogenase (decarboxylating) (975 aa).

An N6-(pyridoxal phosphate)lysine modification is found at Lys723.

Belongs to the GcvP family. The glycine cleavage system is composed of four proteins: P, T, L and H. Pyridoxal 5'-phosphate is required as a cofactor.

It catalyses the reaction N(6)-[(R)-lipoyl]-L-lysyl-[glycine-cleavage complex H protein] + glycine + H(+) = N(6)-[(R)-S(8)-aminomethyldihydrolipoyl]-L-lysyl-[glycine-cleavage complex H protein] + CO2. The glycine cleavage system catalyzes the degradation of glycine. The P protein binds the alpha-amino group of glycine through its pyridoxal phosphate cofactor; CO(2) is released and the remaining methylamine moiety is then transferred to the lipoamide cofactor of the H protein. The polypeptide is Glycine dehydrogenase (decarboxylating) (Burkholderia orbicola (strain MC0-3)).